Consider the following 354-residue polypeptide: NAD-dependent protein deacetylase hst2-2 (354 aa).

The Deacetylase sirtuin-type domain occupies Gln-16 to Asp-279. Residues Gly-43–Tyr-63 and Gln-126–Asp-129 each bind NAD(+). His-146 (proton acceptor) is an active-site residue. 4 residues coordinate Zn(2+): Cys-154, Cys-157, Cys-178, and Cys-183. NAD(+) contacts are provided by residues Gly-220–Ser-222, Asn-245–Glu-247, and Cys-265.

Belongs to the sirtuin family. Class I subfamily. It depends on Zn(2+) as a cofactor.

The protein localises to the nucleus. The enzyme catalyses N(6)-acetyl-L-lysyl-[protein] + NAD(+) + H2O = 2''-O-acetyl-ADP-D-ribose + nicotinamide + L-lysyl-[protein]. In terms of biological role, NAD-dependent histone deacetylase, which could function in telomeric silencing, cell cycle progression and chromosome stability. The polypeptide is NAD-dependent protein deacetylase hst2-2 (Emericella nidulans (strain FGSC A4 / ATCC 38163 / CBS 112.46 / NRRL 194 / M139) (Aspergillus nidulans)).